The sequence spans 158 residues: Peptide methionine sulfoxide reductase MsrA (158 aa).

Cys10 is an active-site residue.

This sequence belongs to the MsrA Met sulfoxide reductase family.

It carries out the reaction L-methionyl-[protein] + [thioredoxin]-disulfide + H2O = L-methionyl-(S)-S-oxide-[protein] + [thioredoxin]-dithiol. The catalysed reaction is [thioredoxin]-disulfide + L-methionine + H2O = L-methionine (S)-S-oxide + [thioredoxin]-dithiol. Its function is as follows. Has an important function as a repair enzyme for proteins that have been inactivated by oxidation. Catalyzes the reversible oxidation-reduction of methionine sulfoxide in proteins to methionine. The protein is Peptide methionine sulfoxide reductase MsrA of Alkaliphilus metalliredigens (strain QYMF).